We begin with the raw amino-acid sequence, 186 residues long: MAKNEIIQKAEEKMQKAQNVLERDLGSIRAGRANASLLDKVSVDYYGAPTPLNQMASITIPEPRVLLVTPYDKSVLNDIEQAILMSDLGINPANDGSAIRLVVPQLTEETRKDLAKNVKAEGEKAKVAVRNIRRDAMDTLKKANKNGDYNDDEFHDLEKQTQDSTDKAIKVVDEIVANKEKEVLEG.

Belongs to the RRF family.

Its subcellular location is the cytoplasm. Responsible for the release of ribosomes from messenger RNA at the termination of protein biosynthesis. May increase the efficiency of translation by recycling ribosomes from one round of translation to another. This chain is Ribosome-recycling factor, found in Pediococcus pentosaceus (strain ATCC 25745 / CCUG 21536 / LMG 10740 / 183-1w).